A 202-amino-acid polypeptide reads, in one-letter code: Oocyte-secreted protein 1 (202 aa).

The first 21 residues, 1–21, serve as a signal peptide directing secretion; sequence MKPFVGLLGLLLLLSFMKTCA. Residues 157-183 form a disordered region; that stretch reads QPNLSTSSEDHHVSTEPWASETSRSEA.

The protein belongs to the PLAC1 family. In terms of tissue distribution, expressed in oocytes in primary through antral-stage follicles. Expressed in liver and ovary.

The protein localises to the secreted. Functionally, may be involved in cell differentiation. This chain is Oocyte-secreted protein 1 (Oosp1), found in Mus musculus (Mouse).